The following is a 569-amino-acid chain: Peroxisomal targeting signal receptor (569 aa).

Residue cysteine 9 forms a Glycyl cysteine thioester (Cys-Gly) (interchain with G-Cter in ubiquitin) linkage. The amphipathic helix 1 (AH1) stretch occupies residues alanine 10 to serine 32. Lysine 21 participates in a covalent cross-link: Glycyl lysine isopeptide (Lys-Gly) (interchain with G-Cter in ubiquitin). The disordered stretch occupies residues serine 23–glutamine 42. The segment at arginine 57 to phenylalanine 72 is amphipathic helix 2 (AH2). Short sequence motifs (wxxxF/Y motif) lie at residues tryptophan 118–phenylalanine 122 and tryptophan 183–phenylalanine 187. Residues phenylalanine 218–leucine 234 are amphipathic helix 4 (AH4). The WxxxF/Y motif 3 motif lies at tryptophan 243 to phenylalanine 247. 7 TPR repeats span residues leucine 272–histidine 305, valine 306–asparagine 339, leucine 340–arginine 377, alanine 378–aspartate 415, serine 416–aspartate 449, alanine 450–phenylalanine 483, and valine 484–glutamate 517.

It belongs to the peroxisomal targeting signal receptor family. Interacts (via WxxxF/Y and LVxEF motifs) with PEX14; promoting translocation through the PEX13-PEX14 docking complex. Post-translationally, monoubiquitinated at Cys-9 by PEX2 during PEX5 passage through the retrotranslocation channel: monoubiquitination acts as a signal for PEX5 extraction and is required for proper export from peroxisomes and recycling. When PEX5 recycling is compromised, polyubiquitinated at Lys-21 by PEX10 during its passage through the retrotranslocation channel, leading to its degradation.

It localises to the cytoplasm. It is found in the cytosol. Its subcellular location is the peroxisome matrix. Functionally, receptor that mediates peroxisomal import of proteins containing a C-terminal PTS1-type tripeptide peroxisomal targeting signal (SKL-type). Binds to cargo proteins containing a PTS1 peroxisomal targeting signal in the cytosol, and translocates them into the peroxisome matrix by passing through the PEX13-PEX14 docking complex along with cargo proteins. PEX5 receptor is then retrotranslocated into the cytosol, leading to release of bound cargo in the peroxisome matrix, and reset for a subsequent peroxisome import cycle. The polypeptide is Peroxisomal targeting signal receptor (PEX5) (Pichia angusta (Yeast)).